Consider the following 226-residue polypeptide: uncharacterized protein (226 aa).

This is an uncharacterized protein from Haemophilus influenzae (strain ATCC 51907 / DSM 11121 / KW20 / Rd).